A 206-amino-acid polypeptide reads, in one-letter code: Orotate phosphoribosyltransferase (206 aa).

5-phospho-alpha-D-ribose 1-diphosphate contacts are provided by residues Lys-26, 72–73, Arg-99, Lys-100, Lys-103, His-105, and 124–132; these read YK and DDVMTSGFS. The orotate site is built by Thr-128 and Arg-157.

Belongs to the purine/pyrimidine phosphoribosyltransferase family. PyrE subfamily. As to quaternary structure, homodimer. Requires Mg(2+) as cofactor.

The catalysed reaction is orotidine 5'-phosphate + diphosphate = orotate + 5-phospho-alpha-D-ribose 1-diphosphate. Its pathway is pyrimidine metabolism; UMP biosynthesis via de novo pathway; UMP from orotate: step 1/2. In terms of biological role, catalyzes the transfer of a ribosyl phosphate group from 5-phosphoribose 1-diphosphate to orotate, leading to the formation of orotidine monophosphate (OMP). The protein is Orotate phosphoribosyltransferase of Buchnera aphidicola subsp. Baizongia pistaciae (strain Bp).